The sequence spans 794 residues: 6-hydroxypseudooxynicotine dehydrogenase complex subunit gamma (794 aa).

In terms of assembly, heterohexamer of 2 alpha (kdhA), 2 beta (kdhB) and 2 gamma (kdhC) subunit. Dimer of heterotrimers. It depends on Mo-molybdopterin cytosine dinucleotide as a cofactor.

It catalyses the reaction 6-hydroxypseudooxynicotine + A + H2O = 2,6-dihydroxypseudooxynicotine + AH2. The protein operates within alkaloid degradation; nicotine degradation. Functionally, molybdo-flavoprotein enzyme complex involved in nicotine degradation. The subunit gamma (large subunit) contains the substrate-binding sites, the subunit alpha (medium subunit) binds FAD and the subunit beta (small subunit) has a 2Fe-2S ferredoxin-type domain which binds 2 2Fe-2S clusters. The chain is 6-hydroxypseudooxynicotine dehydrogenase complex subunit gamma (kdhC) from Paenarthrobacter nicotinovorans (Arthrobacter nicotinovorans).